A 264-amino-acid chain; its full sequence is Acyl-[acyl-carrier-protein]--UDP-N-acetylglucosamine O-acyltransferase (264 aa).

This sequence belongs to the transferase hexapeptide repeat family. LpxA subfamily. In terms of assembly, homotrimer.

Its subcellular location is the cytoplasm. It carries out the reaction a (3R)-hydroxyacyl-[ACP] + UDP-N-acetyl-alpha-D-glucosamine = a UDP-3-O-[(3R)-3-hydroxyacyl]-N-acetyl-alpha-D-glucosamine + holo-[ACP]. The protein operates within glycolipid biosynthesis; lipid IV(A) biosynthesis; lipid IV(A) from (3R)-3-hydroxytetradecanoyl-[acyl-carrier-protein] and UDP-N-acetyl-alpha-D-glucosamine: step 1/6. Functionally, involved in the biosynthesis of lipid A, a phosphorylated glycolipid that anchors the lipopolysaccharide to the outer membrane of the cell. The polypeptide is Acyl-[acyl-carrier-protein]--UDP-N-acetylglucosamine O-acyltransferase (Rickettsia conorii (strain ATCC VR-613 / Malish 7)).